The following is a 1077-amino-acid chain: Adenylate cyclase type 4 (1077 aa).

Over 1 to 28 (MARLFSPRPPPSEDLFYETYYSLSQQYP) the chain is Cytoplasmic. 6 helical membrane-spanning segments follow: residues 29 to 50 (LLIL…VAWA), 61 to 80 (FLTT…GLAS), 94 to 117 (GLIW…VSAW), 120 to 138 (VSFF…PLGM), 141 to 162 (AAAA…YLGW), and 170 to 190 (LLPQ…VGAY). The Cytoplasmic segment spans residues 191–582 (HKALMERALR…YRLSALPAFK (392 aa)). 3 residues coordinate Mg(2+): D278, I279, and D322. ATP-binding positions include 278-283 (DIVGFT), 320-322 (LGD), and R366. The tract at residues 503–524 (TSTPLPEKAFSPQWSLDRSRTP) is disordered. A Phosphoserine modification is found at S517. T533 is subject to Phosphothreonine. The next 3 membrane-spanning stretches (helical) occupy residues 583–604 (YYAA…LVTT), 608–630 (ALII…CFSE), and 661–684 (VALG…FLPV). Topologically, residues 685–717 (SSDCLFLASNVSSVTFNASWEMPGSLPLISIPL) are extracellular. 2 N-linked (GlcNAc...) asparagine glycosylation sites follow: N694 and N701. 3 helical membrane-spanning segments follow: residues 718-738 (ISIP…SLFL), 746-766 (LLLL…SHAW), and 793-809 (MGAI…LVLA). Over 810 to 1077 (RQNEYYCRLD…LTRTGSPSAS (268 aa)) the chain is Cytoplasmic. Residues K927, 1007-1009 (DIW), 1014-1018 (NVASR), and K1054 each bind ATP.

The protein belongs to the adenylyl cyclase class-4/guanylyl cyclase family. Mg(2+) is required as a cofactor. Mn(2+) serves as cofactor.

The protein resides in the cell membrane. It localises to the cytoplasm. It catalyses the reaction ATP = 3',5'-cyclic AMP + diphosphate. Activated by forskolin. Insensitive to calcium/calmodulin. Stimulated by GNAS and by the G-protein beta and gamma subunit complex. Functionally, catalyzes the formation of the signaling molecule cAMP in response to G-protein signaling. In Mus musculus (Mouse), this protein is Adenylate cyclase type 4 (Adcy4).